The chain runs to 647 residues: DNA ligase (647 aa).

NAD(+)-binding positions include 30-34 (DEEYD), 79-80 (SM), and E105. The N6-AMP-lysine intermediate role is filled by K107. NAD(+)-binding residues include R128, E162, and K301. Residues C395, C398, C411, and C416 each contribute to the Zn(2+) site. The BRCT domain maps to 570–647 (KSDGVIFGKT…ESAFNELVKE (78 aa)).

This sequence belongs to the NAD-dependent DNA ligase family. LigA subfamily. The cofactor is Mg(2+). Mn(2+) is required as a cofactor.

The catalysed reaction is NAD(+) + (deoxyribonucleotide)n-3'-hydroxyl + 5'-phospho-(deoxyribonucleotide)m = (deoxyribonucleotide)n+m + AMP + beta-nicotinamide D-nucleotide.. In terms of biological role, DNA ligase that catalyzes the formation of phosphodiester linkages between 5'-phosphoryl and 3'-hydroxyl groups in double-stranded DNA using NAD as a coenzyme and as the energy source for the reaction. It is essential for DNA replication and repair of damaged DNA. The sequence is that of DNA ligase from Campylobacter jejuni subsp. jejuni serotype O:2 (strain ATCC 700819 / NCTC 11168).